The chain runs to 317 residues: Lipase 1 (317 aa).

A signal peptide spans 1–18 (MLLKRLCFAALFSLSMVG). The N-palmitoyl cysteine moiety is linked to residue cysteine 19. Cysteine 19 carries S-diacylglycerol cysteine lipidation. Residues 69 to 296 (PLLLIHGFGG…MEDVGHVPMV (228 aa)) enclose the AB hydrolase-1 domain. The active site involves histidine 74. Serine 142 acts as the Nucleophile in catalysis. Residues glutamate 270 and histidine 292 each act as charge relay system in the active site.

The protein resides in the cell outer membrane. It carries out the reaction a triacylglycerol + H2O = a diacylglycerol + a fatty acid + H(+). The polypeptide is Lipase 1 (lip1) (Psychrobacter immobilis).